Consider the following 438-residue polypeptide: Flotillin-2 (438 aa).

The protein belongs to the band 7/mec-2 family. Flotillin subfamily. In terms of assembly, heterooligomeric complex of flotillins 1 and 2.

It localises to the membrane. In terms of biological role, may play a role in axon growth and regeneration. May be involved in epidermal cell adhesion and epidermal structure and function. This is Flotillin-2 from Drosophila melanogaster (Fruit fly).